Consider the following 142-residue polypeptide: Organic hydroperoxide resistance protein-like 2 (142 aa).

It belongs to the OsmC/Ohr family.

The sequence is that of Organic hydroperoxide resistance protein-like 2 from Staphylococcus saprophyticus subsp. saprophyticus (strain ATCC 15305 / DSM 20229 / NCIMB 8711 / NCTC 7292 / S-41).